Consider the following 155-residue polypeptide: Ribosomal RNA large subunit methyltransferase H (155 aa).

S-adenosyl-L-methionine contacts are provided by residues Leu72, Gly103, and 122–127 (LSALTL).

The protein belongs to the RNA methyltransferase RlmH family. Homodimer.

The protein localises to the cytoplasm. It carries out the reaction pseudouridine(1915) in 23S rRNA + S-adenosyl-L-methionine = N(3)-methylpseudouridine(1915) in 23S rRNA + S-adenosyl-L-homocysteine + H(+). Functionally, specifically methylates the pseudouridine at position 1915 (m3Psi1915) in 23S rRNA. The sequence is that of Ribosomal RNA large subunit methyltransferase H from Shigella boydii serotype 18 (strain CDC 3083-94 / BS512).